The chain runs to 286 residues: Shikimate dehydrogenase (NADP(+)) (286 aa).

Residues 20-22 and Thr-65 each bind shikimate; that span reads SLS. Lys-69 (proton acceptor) is an active-site residue. Asp-81 provides a ligand contact to NADP(+). Positions 90 and 105 each coordinate shikimate. Residues 128 to 132 and Thr-217 contribute to the NADP(+) site; that span reads GAGGA. Shikimate is bound at residue Tyr-219. Gly-240 lines the NADP(+) pocket.

This sequence belongs to the shikimate dehydrogenase family. As to quaternary structure, homodimer.

The catalysed reaction is shikimate + NADP(+) = 3-dehydroshikimate + NADPH + H(+). Its pathway is metabolic intermediate biosynthesis; chorismate biosynthesis; chorismate from D-erythrose 4-phosphate and phosphoenolpyruvate: step 4/7. In terms of biological role, involved in the biosynthesis of the chorismate, which leads to the biosynthesis of aromatic amino acids. Catalyzes the reversible NADPH linked reduction of 3-dehydroshikimate (DHSA) to yield shikimate (SA). This chain is Shikimate dehydrogenase (NADP(+)), found in Syntrophobacter fumaroxidans (strain DSM 10017 / MPOB).